We begin with the raw amino-acid sequence, 360 residues long: MSLQRISIESFRNIAAANLLPSEGLNLIYGHNGSGKTSVLEAIYFLGMGRSFRSHLSQRVIRHDEDKLTLFAQLSHHNGESKVGLRRHRNGEIEVKIDGDRVKRLSTLAETLPIQVITPESFSLLFEGPKARRQFVDWGAFHSDEQFYTAWSNVKRILKQRNQLLRNGSSYGNILFWDKELVRYAEQVTQIRNHYVDSLNELLKGIIEEFLPQVNISISFTRGWDSKTDLALLLESQYSRDLATGHTVSGPHKADLRLRVGNLPVQDALSRGQLKLLVCALRIAQGKLLKQQKDKQSIYLVDDLPSELDAQHRQLLLKQLTETGAQIFVTAIEPAAIVDSLASPPNKVFHVEQGRVTVIE.

30–37 (GHNGSGKT) serves as a coordination point for ATP.

This sequence belongs to the RecF family.

The protein resides in the cytoplasm. Functionally, the RecF protein is involved in DNA metabolism; it is required for DNA replication and normal SOS inducibility. RecF binds preferentially to single-stranded, linear DNA. It also seems to bind ATP. The sequence is that of DNA replication and repair protein RecF from Shewanella denitrificans (strain OS217 / ATCC BAA-1090 / DSM 15013).